A 461-amino-acid chain; its full sequence is tRNA modification GTPase MnmE (461 aa).

(6S)-5-formyl-5,6,7,8-tetrahydrofolate contacts are provided by R23, E88, and R127. The 161-residue stretch at 223–383 (GLNTVIVGKP…LKECIKNLFF (161 aa)) folds into the TrmE-type G domain. N233 contributes to the K(+) binding site. Residues 233–238 (NVGKSS), 252–258 (TEIPGTT), and 277–280 (DTAG) contribute to the GTP site. Residue S237 coordinates Mg(2+). The K(+) site is built by T252, I254, and T257. T258 is a Mg(2+) binding site. Residue K461 participates in (6S)-5-formyl-5,6,7,8-tetrahydrofolate binding.

It belongs to the TRAFAC class TrmE-Era-EngA-EngB-Septin-like GTPase superfamily. TrmE GTPase family. In terms of assembly, homodimer. Heterotetramer of two MnmE and two MnmG subunits. K(+) is required as a cofactor.

The protein resides in the cytoplasm. Functionally, exhibits a very high intrinsic GTPase hydrolysis rate. Involved in the addition of a carboxymethylaminomethyl (cmnm) group at the wobble position (U34) of certain tRNAs, forming tRNA-cmnm(5)s(2)U34. This chain is tRNA modification GTPase MnmE, found in Clostridium botulinum (strain Okra / Type B1).